A 121-amino-acid chain; its full sequence is Large ribosomal subunit protein uL18 (121 aa).

Belongs to the universal ribosomal protein uL18 family. In terms of assembly, part of the 50S ribosomal subunit; part of the 5S rRNA/L5/L18/L25 subcomplex. Contacts the 5S and 23S rRNAs.

Its function is as follows. This is one of the proteins that bind and probably mediate the attachment of the 5S RNA into the large ribosomal subunit, where it forms part of the central protuberance. The sequence is that of Large ribosomal subunit protein uL18 from Paraburkholderia xenovorans (strain LB400).